We begin with the raw amino-acid sequence, 293 residues long: Deubiquitinase OTUD6B (293 aa).

Disordered stretches follow at residues 1-43 (MEEV…RRKQ) and 57-114 (QKHE…LEKE). The region spanning 147-284 (LQIKEISSDG…GEHYNSVEPL (138 aa)) is the OTU domain. The cys-loop stretch occupies residues 152-158 (ISSDGHC). Residue aspartate 155 is part of the active site. Residue cysteine 158 is the Nucleophile of the active site. The segment at 219–229 (VADTAAWGGQL) is variable-loop. Residues 267-277 (YMRHAYGLGEH) are his-loop. Histidine 277 is an active-site residue.

It catalyses the reaction Thiol-dependent hydrolysis of ester, thioester, amide, peptide and isopeptide bonds formed by the C-terminal Gly of ubiquitin (a 76-residue protein attached to proteins as an intracellular targeting signal).. In terms of biological role, deubiquitinating enzyme that may play a role in the ubiquitin-dependent regulation of different cellular processes. The chain is Deubiquitinase OTUD6B (otud6b) from Danio rerio (Zebrafish).